Reading from the N-terminus, the 30-residue chain is uncharacterized protein (30 aa).

This is an uncharacterized protein from Saccharomyces cerevisiae (strain ATCC 204508 / S288c) (Baker's yeast).